The following is a 307-amino-acid chain: Synaptophysin (307 aa).

The Cytoplasmic portion of the chain corresponds to 1–19 (MDVVNQLVAGGQFRVVKEP). Positions 15–222 (VVKEPLGFVK…NLWFVFKETG (208 aa)) constitute an MARVEL domain. A helical membrane pass occupies residues 20–43 (LGFVKVLQWVFAIFAFATCGSYTG). Residues 44–101 (ELRLSVECANKTESALNIEVEFEYPFRLHQVYFDAPSCVKGGTTKIFLVGDYSSSAEF) are Vesicular-facing. N-linked (GlcNAc...) asparagine glycosylation occurs at asparagine 53. Tyrosine 75 carries the post-translational modification Phosphotyrosine. Residues 102 to 125 (FVTVAVFAFLYSMGALATYIFLQN) traverse the membrane as a helical segment. Residues 126-132 (KYRENNK) are Cytoplasmic-facing. A helical membrane pass occupies residues 133–156 (GPMMDFLATAVFAFMWLVSSSAWA). Over 157-194 (KGLSDVKMATDPENIIKEMPMCRQTGNTCKELRDPVTS) the chain is Vesicular. Residues 195 to 218 (GLNTSVVFGFLNLVLWVGNLWFVF) traverse the membrane as a helical segment. At 219–307 (KETGWAAPFM…GAPTSFSNQM (89 aa)) the chain is on the cytoplasmic side. Residue threonine 221 is modified to Phosphothreonine. The disordered stretch occupies residues 233–307 (GAPEKQPAPG…GAPTSFSNQM (75 aa)). Over residues 248 to 258 (AGYGQGPGGYG) the composition is skewed to gly residues. The interval 249-298 (GYGQGPGGYGPQDSYGPQGGYQPDYGQPASGGGGYGPQGDYGQQGYGQQG) is repeats, Gly-rich. Over residues 259–276 (PQDSYGPQGGYQPDYGQP) the composition is skewed to low complexity. Phosphotyrosine is present on residues tyrosine 273 and tyrosine 289. Gly residues predominate over residues 277–296 (ASGGGGYGPQGDYGQQGYGQ).

This sequence belongs to the synaptophysin/synaptobrevin family. In terms of assembly, homohexamer or homotetramer. Interacts with SRCIN1. Interacts with VAMP2; the interaction is inhibited by interaction of VAPM2 with SEPT8. In terms of processing, ubiquitinated; mediated by SIAH1 or SIAH2 and leading to its subsequent proteasomal degradation. Phosphorylated by SRC. Expressed in the brain with expression in the cerebrum and the cerebellum.

It is found in the cytoplasmic vesicle. Its subcellular location is the secretory vesicle. The protein localises to the synaptic vesicle membrane. It localises to the synapse. The protein resides in the synaptosome. Its function is as follows. Possibly involved in structural functions as organizing other membrane components or in targeting the vesicles to the plasma membrane. Involved in the regulation of short-term and long-term synaptic plasticity. This is Synaptophysin (Syp) from Rattus norvegicus (Rat).